Consider the following 216-residue polypeptide: Probable chemoreceptor glutamine deamidase CheD (216 aa).

Belongs to the CheD family.

The enzyme catalyses L-glutaminyl-[protein] + H2O = L-glutamyl-[protein] + NH4(+). In terms of biological role, probably deamidates glutamine residues to glutamate on methyl-accepting chemotaxis receptors (MCPs), playing an important role in chemotaxis. The chain is Probable chemoreceptor glutamine deamidase CheD from Halorhodospira halophila (strain DSM 244 / SL1) (Ectothiorhodospira halophila (strain DSM 244 / SL1)).